A 135-amino-acid polypeptide reads, in one-letter code: Galectin-1 (135 aa).

An N-acetylalanine modification is found at Ala-2. A Galectin domain is found at 4 to 135 (GLVASNLNLK…DFKIKCVAFE (132 aa)). Lys-13, Lys-19, and Lys-29 each carry N6-acetyllysine. A Phosphoserine modification is found at Ser-30. A beta-D-galactoside-binding positions include 45-49 (HFNPR), His-53, Asn-62, and 69-72 (WGTE). An N6-acetyllysine; alternate modification is found at Lys-108. Lys-108 is subject to N6-succinyllysine; alternate. At Lys-128 the chain carries N6-acetyllysine.

Binds LGALS3BP. Interacts with CD2, CD3, CD4, CD6, CD7, CD43, ALCAM and CD45. Interacts with laminin. Interacts with SUSD2. Exists in a reversible and active monomer-homodimer equilibrium, the mononomer/dimer state is regulated by lectin concentration. Interacts with cargo receptor TMED10; the interaction mediates the translocation from the cytoplasm into the ERGIC (endoplasmic reticulum-Golgi intermediate compartment) and thereby secretion.

It localises to the cytoplasm. It is found in the secreted. The protein resides in the extracellular space. Its subcellular location is the extracellular matrix. Functionally, lectin that binds beta-galactoside and a wide array of complex carbohydrates. Plays a role in regulating apoptosis, cell proliferation and cell differentiation. Inhibits CD45 protein phosphatase activity and therefore the dephosphorylation of Lyn kinase. Strong inducer of T-cell apoptosis. In Cricetulus griseus (Chinese hamster), this protein is Galectin-1 (LGALS1).